A 174-amino-acid polypeptide reads, in one-letter code: Shikimate kinase (174 aa).

15–20 (GTGKST) contacts ATP. Serine 19 contacts Mg(2+). Substrate contacts are provided by aspartate 37, arginine 61, and glycine 82. Arginine 120 is a binding site for ATP. Arginine 138 contributes to the substrate binding site.

It belongs to the shikimate kinase family. Monomer. Mg(2+) is required as a cofactor.

Its subcellular location is the cytoplasm. The enzyme catalyses shikimate + ATP = 3-phosphoshikimate + ADP + H(+). The protein operates within metabolic intermediate biosynthesis; chorismate biosynthesis; chorismate from D-erythrose 4-phosphate and phosphoenolpyruvate: step 5/7. Functionally, catalyzes the specific phosphorylation of the 3-hydroxyl group of shikimic acid using ATP as a cosubstrate. The protein is Shikimate kinase of Staphylococcus aureus (strain MSSA476).